The following is a 623-amino-acid chain: MSTQDERQINTEYAVSLLEQLKLFYEQQLFTDIVLIVEGTEFPCHKMVLATCSSYFRAMFMSGLSESKQTHVHLRNVDAATLQIIITYAYTGNLAMNDSTVEQLYETACFLQVEDVLQRCREYLIKKINAENCVRLLSFADLFSCEELKQSAKRMVEHKFTAVYHQDAFMQLSHDLLIDILSSDNLNVEKEETVREAAMLWLEYNTESRSQYLSSVLSQIRIDALSEVTQRAWFQGLPPNDKSVVVQGLYKSMPKFFKPRLGMTKEEMMIFIEASSENPCSLYSSVCYSPQAEKVYKLCSPPADLHKVGTVVTPDNDIYIAGGQVPLKNTKTNHSKTSKLQTAFRTVNCFYWFDAQQNTWFPKTPMLFVRIKPSLVCCEGYIYAIGGDSVGGELNRRTVERYDTEKDEWTMVSPLPCAWQWSAAVVVHDCIYVMTLNLMYCYFPRSDSWVEMAMRQTSRSFASAAAFGDKIFYIGGLHIATNSGIRLPSGTVDGSSVTVEIYDVNKNEWKMAANIPAKRYSDPCVRAVVISNSLCVFMRETHLNERAKYVTYQYDLELDRWSLRQHISERVLWDLGRDFRCTVGKLYPSCLEESPWKPPTYLFSTDGTEEFELDGEMVALPPV.

A BTB domain is found at 31 to 98 (TDIVLIVEGT…AYTGNLAMND (68 aa)). Residues 133–229 (CVRLLSFADL…IRIDALSEVT (97 aa)) enclose the BACK domain. S300 bears the Phosphoserine mark. 5 Kelch repeats span residues 317–380 (DIYI…CCEG), 381–429 (YIYA…VVHD), 431–469 (IYVM…AFGD), 470–529 (KIFY…RAVV), and 535–581 (CVFM…DFRC).

In terms of assembly, component of the BCR(KBTBD2) E3 ubiquitin ligase complex, at least composed of CUL3, KBTBD2 and RBX1. Interacts (via the BTB domain) with CUL3.

Its pathway is protein modification; protein ubiquitination. Its function is as follows. Substrate-specific adapter of a BCR (BTB-CUL3-RBX1) E3 ubiquitin ligase complex that acts as a regulator of the insulin signaling pathway, modulating insulin sensitivity by limiting PIK3R1/p85alpha abundance in adipocytes. Targets PIK3R1, the regulatory subunit of phosphatidylinositol 3-kinase (PI3K), for 'Lys-48'-linked polyubiquitination and proteasome-mediated degradation. The chain is Kelch repeat and BTB domain-containing protein 2 from Homo sapiens (Human).